A 392-amino-acid chain; its full sequence is Queuine tRNA-ribosyltransferase (392 aa).

The active-site Proton acceptor is the aspartate 93. Substrate contacts are provided by residues 93–97 (DSGGY), aspartate 147, glutamine 189, and glycine 216. Residues 247-253 (GVGAPED) form an RNA binding region. Aspartate 266 functions as the Nucleophile in the catalytic mechanism. Residues 271–275 (TRVAR) are RNA binding; important for wobble base 34 recognition. Zn(2+) contacts are provided by cysteine 304, cysteine 306, cysteine 309, and histidine 335.

This sequence belongs to the queuine tRNA-ribosyltransferase family. Homodimer. Within each dimer, one monomer is responsible for RNA recognition and catalysis, while the other monomer binds to the replacement base PreQ1. Requires Zn(2+) as cofactor.

It carries out the reaction 7-aminomethyl-7-carbaguanine + guanosine(34) in tRNA = 7-aminomethyl-7-carbaguanosine(34) in tRNA + guanine. Its pathway is tRNA modification; tRNA-queuosine biosynthesis. Functionally, catalyzes the base-exchange of a guanine (G) residue with the queuine precursor 7-aminomethyl-7-deazaguanine (PreQ1) at position 34 (anticodon wobble position) in tRNAs with GU(N) anticodons (tRNA-Asp, -Asn, -His and -Tyr). Catalysis occurs through a double-displacement mechanism. The nucleophile active site attacks the C1' of nucleotide 34 to detach the guanine base from the RNA, forming a covalent enzyme-RNA intermediate. The proton acceptor active site deprotonates the incoming PreQ1, allowing a nucleophilic attack on the C1' of the ribose to form the product. After dissociation, two additional enzymatic reactions on the tRNA convert PreQ1 to queuine (Q), resulting in the hypermodified nucleoside queuosine (7-(((4,5-cis-dihydroxy-2-cyclopenten-1-yl)amino)methyl)-7-deazaguanosine). This is Queuine tRNA-ribosyltransferase from Dehalococcoides mccartyi (strain ATCC BAA-2100 / JCM 16839 / KCTC 5957 / BAV1).